Reading from the N-terminus, the 514-residue chain is Extracellular exo-inulinase inuE (514 aa).

Residues 1 to 18 (MRAFLALIFLTFVMNVES) form the signal peptide. Residues 33 to 34 (ND) and Q52 contribute to the substrate site. The active-site Nucleophile is the D34. N-linked (GlcNAc...) asparagine glycosylation occurs at N56. Substrate is bound by residues W60 and S95. N-linked (GlcNAc...) asparagine glycans are attached at residues N104 and N110. 162–163 (RD) serves as a coordination point for substrate. Residues N197 and N203 are each glycosylated (N-linked (GlcNAc...) asparagine). E214 and W300 together coordinate substrate. E214 functions as the Proton donor/acceptor in the catalytic mechanism. 4 N-linked (GlcNAc...) asparagine glycosylation sites follow: N357, N371, N389, and N422.

This sequence belongs to the glycosyl hydrolase 32 family.

It is found in the secreted. The enzyme catalyses Hydrolysis of terminal, non-reducing (2-&gt;1)- and (2-&gt;6)-linked beta-D-fructofuranose residues in fructans.. Exo-inulinase involved in utilization of the plant storage polymer inulin, consisting of fructooligosaccharides with a degree of polymerization (DP) value from 2 to 60. Splits off terminal fructose units successively from the non-reducing end of the inulin molecule. In Meyerozyma guilliermondii (Yeast), this protein is Extracellular exo-inulinase inuE.